The sequence spans 295 residues: NAD kinase (295 aa).

The Proton acceptor role is filled by aspartate 72. NAD(+)-binding positions include 72–73 (DG), 146–147 (ND), arginine 157, lysine 174, aspartate 176, 187–192 (TAYALS), and glutamine 247.

Belongs to the NAD kinase family. A divalent metal cation serves as cofactor.

The protein resides in the cytoplasm. It carries out the reaction NAD(+) + ATP = ADP + NADP(+) + H(+). In terms of biological role, involved in the regulation of the intracellular balance of NAD and NADP, and is a key enzyme in the biosynthesis of NADP. Catalyzes specifically the phosphorylation on 2'-hydroxyl of the adenosine moiety of NAD to yield NADP. This is NAD kinase from Azotobacter vinelandii (strain DJ / ATCC BAA-1303).